Here is a 368-residue protein sequence, read N- to C-terminus: Agmatine deiminase (368 aa).

Residue Cys357 is the Amidino-cysteine intermediate of the active site.

Belongs to the agmatine deiminase family. Homodimer.

It catalyses the reaction agmatine + H2O = N-carbamoylputrescine + NH4(+). It participates in amine and polyamine biosynthesis; putrescine biosynthesis via agmatine pathway; N-carbamoylputrescine from agmatine: step 1/1. Functionally, mediates the hydrolysis of agmatine into N-carbamoylputrescine in the arginine decarboxylase (ADC) pathway of putrescine biosynthesis, a basic polyamine. The chain is Agmatine deiminase from Pseudomonas fluorescens (strain ATCC BAA-477 / NRRL B-23932 / Pf-5).